The sequence spans 1376 residues: Protein FAM135B (1376 aa).

A compositionally biased stretch (acidic residues) spans 431-442; it reads NEDECEFSEESP. The interval 431 to 489 is disordered; the sequence is NEDECEFSEESPSENTHVGSKPHSIQSTTVHENASFEKPNVGTKAQEDCSTEGPEQGFD. Polar residues predominate over residues 443–462; the sequence is SENTHVGSKPHSIQSTTVHE.

This sequence belongs to the FAM135 family.

The sequence is that of Protein FAM135B (fam135b) from Xenopus laevis (African clawed frog).